Reading from the N-terminus, the 445-residue chain is 26S proteasome regulatory subunit RPN5 (445 aa).

An N-acetylserine modification is found at Ser2. The 175-residue stretch at 233–407 folds into the PCI domain; that stretch reads EYLEVAQYLQ…KIVNFEKPKN (175 aa).

It belongs to the proteasome subunit p55 family. N-acetylated by NAT1.

Acts as a regulatory subunit of the 26S proteasome which is involved in the ATP-dependent degradation of ubiquitinated proteins. The chain is 26S proteasome regulatory subunit RPN5 (RPN5) from Saccharomyces cerevisiae (strain ATCC 204508 / S288c) (Baker's yeast).